The following is a 1755-amino-acid chain: MESQQLSQHSPISHGSACASVTSKEVHTNQDPLDVSASKTEECEKASTKANSQQTTTPASSAVPENPHHASPQPASVPPPQNGPYPQQCMMTQNQANPSGWSFYGHPSMIPYTPYQMSPMYFPPGPQSQFPQYPSSVGTPLSTPSPESGNTFTDSSSADSDMTSTKKYVRPPPMLTSPNDFPNWVKTYIKFLQNSNLGGIIPTVNGKPVRQITDDELTFLYNTFQIFAPSQFLPTWVKDILSVDYTDIMKILSKSIEKMQSDTQEANDIVTLANLQYNGSTPADAFETKVTNIIDRLNNNGIHINNKVACQLIMRGLSGEYKFLRYTRHRHLNMTVAELFLDIHAIYEEQQGSRNSKPNYRRNLSDEKNDSRSYTNTTKPKVIARNPQKTNNSKSKTARAHNVSTSNNSPSTDNDSISKSTTEPIQLNNKHDLHLGQELTESTVNHTNHSDDELPGHLLLDSGASRTLIRSAHHIHSASSNPDINVVDAQKRNIPINAIGDLQFHFQDNTKTSIKVLHTPNIAYDLLSLNELAAVDITACFTKNVLERSDGTVLAPIVKYGDFYWVSKKYLLPSNISVPTINNVHTSESTRKYPYPFIHRMLAHANAQTIRYSLKNNTITYFNESDVDWSSAIDYQCPDCLIGKSTKHRHIKGSRLKYQNSYEPFQYLHTDIFGPVHNLPKSAPSYFISFTDETTKFRWVYPLHDRREDSILDVFTTILAFIKNQFQASVLVIQMDRGSEYTNRTLHKFLEKNGITPCYTTTADSRAHGVAERLNRTLLDDCRTQLQCSGLPNHLWFSAIEFSTIVRNSLASPKSKKSARQHAGLAGLDISTLLPFGQPVIVNDHNPNSKIHPRGIPGYALHPSRNSYGYIIYLPSLKKTVDTTNYVILQGKESRLDQFNYDALTFDEDLNRLTASYQSFIASNEIQQSDDLNIESDHDFQSDIELHPEQPRNVLSKAVSPTDSTPPSTHTEDSKRVSKTNIRAPREVDPNISESNILPSKKRSSTPQISNIESTGSGGMHKLNVPLLAPMSQSNTHESSHASKSKDFRHSDSYSENETNHTNVPISSTGGTNNKTVPQISDQETEKRIIHRSPSIDASPPENNSSHNIVPIKTPTTVSEQNTEESIIADLPLPDLPPESPTEFPDPFKELPPINSHQTNSSLGGIGDSNAYTTINSKKRSLEDNETEIKVSRDTWNTKNMRSLEPPRSKKRIHLIAAVKAVKSIKPIRTTLRYDEAITYNKDIKEKEKYIEAYHKEVNQLLKMKTWDTDEYYDRKEIDPKRVINSMFIFNKKRDGTHKARFVARGDIQHPDTYDSGMQSNTVHHYALMTSLSLALDNNYYITQLDISSAYLYADIKEELYIRPPPHLGMNDKLIRLKKSLYGLKQSGANWYETIKSYLIKQCGMEEVRGWSCVFKNSQVTICLFVDDMILFSKDLNANKKIITTLKKQYDTKIINLGESDNEIQYDILGLEIKYQRGKYMKLGMENSLTEKIPKLNVPLNPKGRKLSAPGQPGLYIDQDELEIDEDEYKEKVHEMQKLIGLASYVGYKFRFDLLYYINTLAQHILFPSRQVLDMTYELIQFMWDTRDKQLIWHKNKPTEPDNKLVAISDASYGNQPYYKSQIGNIYLLNGKVIGGKSTKASLTCTSTTEAEIHAISESVPLLNNLSYLIQELNKKPIIKGLLTDSRSTISIIKSTNEEKFRNRFFGTKAMRLRDEVSGNNLYVYYIETKKNIADVMTKPLPIKTFKLLTNKWIH.

Polar residues-rich tracts occupy residues 1–23, 48–60, and 127–152; these read MESQ…SVTS, TKAN…TPAS, and QSQF…GNTF. Disordered stretches follow at residues 1–93, 126–174, and 352–421; these read MESQ…MMTQ, PQSQ…PPPM, and GSRN…SKST. A compositionally biased stretch (low complexity) spans 153–165; the sequence is TDSSSADSDMTST. The interval 299–401 is RNA-binding; sequence NNGIHINNKV…NSKSKTARAH (103 aa). Residues 402-418 show a composition bias toward low complexity; that stretch reads NVSTSNNSPSTDNDSIS. Ser-416 is subject to Phosphoserine. Asp-461 functions as the For protease activity; shared with dimeric partner in the catalytic mechanism. Positions 583 to 640 are integrase-type zinc finger-like; that stretch reads NVHTSESTRKYPYPFIHRMLAHANAQTIRYSLKNNTITYFNESDVDWSSAIDYQCPDC. In terms of domain architecture, Integrase catalytic spans 660-835; the sequence is NSYEPFQYLH…AGLDISTLLP (176 aa). The Mg(2+) site is built by Asp-671 and Asp-736. 3 disordered regions span residues 956–1087, 1092–1111, and 1130–1171; these read SKAV…ETEK, RSPS…NIVP, and DLPL…DSNA. Over residues 960-969 the composition is skewed to low complexity; that stretch reads SPTDSTPPST. Residues 1005–1015 show a composition bias toward polar residues; the sequence is STPQISNIEST. The span at 1038–1053 shows a compositional bias: basic and acidic residues; sequence ESSHASKSKDFRHSDS. 2 stretches are compositionally biased toward polar residues: residues 1054–1082 and 1101–1111; these read YSEN…QISD and PENNSSHNIVP. The Bipartite nuclear localization signal motif lies at 1178-1212; it reads KKRSLEDNETEIKVSRDTWNTKNMRSLEPPRSKKR. The Reverse transcriptase Ty1/copia-type domain occupies 1338-1476; it reads NNYYITQLDI…DILGLEIKYQ (139 aa). 6 residues coordinate Mg(2+): Asp-1346, Asp-1427, Asp-1428, Asp-1610, Glu-1652, and Asp-1685. One can recognise an RNase H Ty1/copia-type domain in the interval 1610–1752; it reads DASYGNQPYY…IKTFKLLTNK (143 aa).

The capsid protein forms a homotrimer, from which the VLPs are assembled. The protease is a homodimer, whose active site consists of two apposed aspartic acid residues. Initially, virus-like particles (VLPs) are composed of the structural unprocessed proteins Gag and Gag-Pol, and also contain the host initiator methionine tRNA (tRNA(i)-Met) which serves as a primer for minus-strand DNA synthesis, and a dimer of genomic Ty RNA. Processing of the polyproteins occurs within the particle and proceeds by an ordered pathway, called maturation. First, the protease (PR) is released by autocatalytic cleavage of the Gag-Pol polyprotein yielding capsid protein p45 and a Pol-p154 precursor protein. This cleavage is a prerequisite for subsequent processing of Pol-p154 at the remaining sites to release the mature structural and catalytic proteins. Maturation takes place prior to the RT reaction and is required to produce transposition-competent VLPs.

The protein localises to the cytoplasm. It is found in the nucleus. It catalyses the reaction DNA(n) + a 2'-deoxyribonucleoside 5'-triphosphate = DNA(n+1) + diphosphate. The enzyme catalyses Endonucleolytic cleavage to 5'-phosphomonoester.. Capsid protein (CA) is the structural component of the virus-like particle (VLP), forming the shell that encapsulates the retrotransposons dimeric RNA genome. The particles are assembled from trimer-clustered units and there are holes in the capsid shells that allow for the diffusion of macromolecules. CA also has nucleocapsid-like chaperone activity, promoting primer tRNA(i)-Met annealing to the multipartite primer-binding site (PBS), dimerization of Ty1 RNA and initiation of reverse transcription. In terms of biological role, the aspartyl protease (PR) mediates the proteolytic cleavages of the Gag and Gag-Pol polyproteins after assembly of the VLP. Functionally, reverse transcriptase/ribonuclease H (RT) is a multifunctional enzyme that catalyzes the conversion of the retro-elements RNA genome into dsDNA within the VLP. The enzyme displays a DNA polymerase activity that can copy either DNA or RNA templates, and a ribonuclease H (RNase H) activity that cleaves the RNA strand of RNA-DNA heteroduplexes during plus-strand synthesis and hydrolyzes RNA primers. The conversion leads to a linear dsDNA copy of the retrotransposon that includes long terminal repeats (LTRs) at both ends. Its function is as follows. Integrase (IN) targets the VLP to the nucleus, where a subparticle preintegration complex (PIC) containing at least integrase and the newly synthesized dsDNA copy of the retrotransposon must transit the nuclear membrane. Once in the nucleus, integrase performs the integration of the dsDNA into the host genome. In Saccharomyces cerevisiae (strain ATCC 204508 / S288c) (Baker's yeast), this protein is Transposon Ty1-ER1 Gag-Pol polyprotein (TY1B-ER1).